The chain runs to 399 residues: Galactokinase (399 aa).

Residue glutamate 42–aspartate 45 participates in substrate binding. ATP contacts are provided by residues serine 76 and alanine 133 to serine 139. Mg(2+) contacts are provided by serine 139 and glutamate 171. The Proton acceptor role is filled by aspartate 183. Tyrosine 233 is a binding site for substrate.

Belongs to the GHMP kinase family. GalK subfamily. As to quaternary structure, monomer.

It localises to the cytoplasm. The enzyme catalyses alpha-D-galactose + ATP = alpha-D-galactose 1-phosphate + ADP + H(+). Its pathway is carbohydrate metabolism; galactose metabolism. Its function is as follows. Catalyzes the transfer of the gamma-phosphate of ATP to D-galactose to form alpha-D-galactose-1-phosphate (Gal-1-P). The chain is Galactokinase from Lactococcus lactis subsp. lactis (strain IL1403) (Streptococcus lactis).